Consider the following 520-residue polypeptide: GMP synthase [glutamine-hydrolyzing] (520 aa).

Positions 9–202 (TILIIDFGSQ…VHRIVGVKPG (194 aa)) constitute a Glutamine amidotransferase type-1 domain. The active-site Nucleophile is Cys-86. Catalysis depends on residues His-176 and Glu-178. In terms of domain architecture, GMPS ATP-PPase spans 203–395 (WTMGAYREQA…LGLPDSFIGR (193 aa)). An ATP-binding site is contributed by 230–236 (SGGVDSS).

As to quaternary structure, homodimer.

It carries out the reaction XMP + L-glutamine + ATP + H2O = GMP + L-glutamate + AMP + diphosphate + 2 H(+). The protein operates within purine metabolism; GMP biosynthesis; GMP from XMP (L-Gln route): step 1/1. In terms of biological role, catalyzes the synthesis of GMP from XMP. The protein is GMP synthase [glutamine-hydrolyzing] of Brucella ovis (strain ATCC 25840 / 63/290 / NCTC 10512).